The following is a 605-amino-acid chain: Class II receptor tyrosine kinase (605 aa).

The 67-residue stretch at 1-67 (MWSSPGRNLE…DGESASFRVD (67 aa)) folds into the Ig-like C2-type domain. Residues 1 to 84 (MWSSPGRNLE…GSNSGVIAGV (84 aa)) lie on the Extracellular side of the membrane. Residues Asn26, Asn44, and Asn72 are each glycosylated (N-linked (GlcNAc...) asparagine). Residues 85–105 (LITLLLLIALIIILICVFWVV) traverse the membrane as a helical segment. Over 106-605 (WRYRRRGKFD…GRPRGVAGCV (500 aa)) the chain is Cytoplasmic. The segment at 209–230 (EELSPIQEKPTRRNTGLSTYSQ) is disordered. Residues 221–230 (RNTGLSTYSQ) are compositionally biased toward polar residues. The region spanning 346 to 605 (IREVKQIGVG…GRPRGVAGCV (260 aa)) is the Protein kinase domain. ATP contacts are provided by residues 352–360 (IGVGQFGAV) and Lys393. Residue Asp496 is the Proton acceptor of the active site. The residue at position 527 (Tyr527) is a Phosphotyrosine; by autocatalysis.

The protein belongs to the protein kinase superfamily. Tyr protein kinase family. Insulin receptor subfamily. Post-translationally, phosphorylated.

The protein localises to the cell membrane. It carries out the reaction L-tyrosyl-[protein] + ATP = O-phospho-L-tyrosyl-[protein] + ADP + H(+). The polypeptide is Class II receptor tyrosine kinase (TK) (Geodia cydonium (Sponge)).